The chain runs to 588 residues: Proline--tRNA ligase (588 aa).

Belongs to the class-II aminoacyl-tRNA synthetase family. ProS type 1 subfamily. In terms of assembly, homodimer.

The protein resides in the cytoplasm. It carries out the reaction tRNA(Pro) + L-proline + ATP = L-prolyl-tRNA(Pro) + AMP + diphosphate. In terms of biological role, catalyzes the attachment of proline to tRNA(Pro) in a two-step reaction: proline is first activated by ATP to form Pro-AMP and then transferred to the acceptor end of tRNA(Pro). As ProRS can inadvertently accommodate and process non-cognate amino acids such as alanine and cysteine, to avoid such errors it has two additional distinct editing activities against alanine. One activity is designated as 'pretransfer' editing and involves the tRNA(Pro)-independent hydrolysis of activated Ala-AMP. The other activity is designated 'posttransfer' editing and involves deacylation of mischarged Ala-tRNA(Pro). The misacylated Cys-tRNA(Pro) is not edited by ProRS. This is Proline--tRNA ligase from Helicobacter hepaticus (strain ATCC 51449 / 3B1).